The chain runs to 89 residues: Large ribosomal subunit protein uL23cz/uL23cy (89 aa).

This sequence belongs to the universal ribosomal protein uL23 family. As to quaternary structure, part of the 50S ribosomal subunit.

It localises to the plastid. Its subcellular location is the chloroplast. In terms of biological role, binds to 23S rRNA. The polypeptide is Large ribosomal subunit protein uL23cz/uL23cy (rpl23-A) (Calycanthus floridus var. glaucus (Eastern sweetshrub)).